Reading from the N-terminus, the 238-residue chain is tRNA (guanine-N(7)-)-methyltransferase (238 aa).

S-adenosyl-L-methionine-binding residues include E70, D95, D122, and D145. D145 is an active-site residue. Substrate-binding positions include K149, D181, and 216-219 (TKFE).

The protein belongs to the class I-like SAM-binding methyltransferase superfamily. TrmB family.

It catalyses the reaction guanosine(46) in tRNA + S-adenosyl-L-methionine = N(7)-methylguanosine(46) in tRNA + S-adenosyl-L-homocysteine. It participates in tRNA modification; N(7)-methylguanine-tRNA biosynthesis. Its function is as follows. Catalyzes the formation of N(7)-methylguanine at position 46 (m7G46) in tRNA. The protein is tRNA (guanine-N(7)-)-methyltransferase of Neisseria meningitidis serogroup C / serotype 2a (strain ATCC 700532 / DSM 15464 / FAM18).